Consider the following 475-residue polypeptide: Ribulose bisphosphate carboxylase large chain (475 aa).

Residues 1 to 2 (MS) constitute a propeptide that is removed on maturation. P3 is modified (N-acetylproline). K14 carries the post-translational modification N6,N6,N6-trimethyllysine. Substrate-binding residues include N123 and T173. K175 functions as the Proton acceptor in the catalytic mechanism. A substrate-binding site is contributed by K177. Mg(2+)-binding residues include K201, D203, and E204. K201 carries the post-translational modification N6-carboxylysine. Residue H294 is the Proton acceptor of the active site. Residues H327 and S379 each contribute to the substrate site.

Belongs to the RuBisCO large chain family. Type I subfamily. Heterohexadecamer of 8 large chains and 8 small chains; disulfide-linked. The disulfide link is formed within the large subunit homodimers. Mg(2+) is required as a cofactor. In terms of processing, the disulfide bond which can form in the large chain dimeric partners within the hexadecamer appears to be associated with oxidative stress and protein turnover.

It localises to the plastid. The protein resides in the chloroplast. It catalyses the reaction 2 (2R)-3-phosphoglycerate + 2 H(+) = D-ribulose 1,5-bisphosphate + CO2 + H2O. The enzyme catalyses D-ribulose 1,5-bisphosphate + O2 = 2-phosphoglycolate + (2R)-3-phosphoglycerate + 2 H(+). Functionally, ruBisCO catalyzes two reactions: the carboxylation of D-ribulose 1,5-bisphosphate, the primary event in carbon dioxide fixation, as well as the oxidative fragmentation of the pentose substrate in the photorespiration process. Both reactions occur simultaneously and in competition at the same active site. The protein is Ribulose bisphosphate carboxylase large chain of Amaranthus hypochondriacus (Prince-of-Wales feather).